A 212-amino-acid polypeptide reads, in one-letter code: MQAQIMNKIFEIFSKNNPKPQTELIYKNDFTLLVAVILSARATDISVNLATKHLFETYNTPEKFLELGEEGLKKYIKSIGLFNSKAKNIIALCQILIKNYQTSIPNNFKELVKLPGVGRKTANVVLNCLFAMPTMAVDTHVFRVSKRIGLAKGNTAAIVEKELLQIIDEKWLTYAHHWLILHGRYICKARKPGCNICPIKEYCEYYINTFSS.

In terms of domain architecture, HhH spans 108 to 127; that stretch reads FKELVKLPGVGRKTANVVLN. Residues C187, C194, C197, and C203 each coordinate [4Fe-4S] cluster.

Belongs to the Nth/MutY family. It depends on [4Fe-4S] cluster as a cofactor.

The catalysed reaction is 2'-deoxyribonucleotide-(2'-deoxyribose 5'-phosphate)-2'-deoxyribonucleotide-DNA = a 3'-end 2'-deoxyribonucleotide-(2,3-dehydro-2,3-deoxyribose 5'-phosphate)-DNA + a 5'-end 5'-phospho-2'-deoxyribonucleoside-DNA + H(+). DNA repair enzyme that has both DNA N-glycosylase activity and AP-lyase activity. The DNA N-glycosylase activity releases various damaged pyrimidines from DNA by cleaving the N-glycosidic bond, leaving an AP (apurinic/apyrimidinic) site. The AP-lyase activity cleaves the phosphodiester bond 3' to the AP site by a beta-elimination, leaving a 3'-terminal unsaturated sugar and a product with a terminal 5'-phosphate. This chain is Endonuclease III, found in Rickettsia prowazekii (strain Madrid E).